The primary structure comprises 739 residues: UPF0313 protein YgiQ (739 aa).

The Radical SAM core domain maps to 372–650 (AYEMIRFSVN…KALLRYHDPA (279 aa)). 3 residues coordinate [4Fe-4S] cluster: C386, C390, and C393. Residues 686–739 (EARRQNRNTRPALTKHTPMATQCQTPATAKKASSTQSRPVNAGAKKRPKAAVGR) are disordered. Over residues 704–724 (MATQCQTPATAKKASSTQSRP) the composition is skewed to polar residues. Residues 729 to 739 (AKKRPKAAVGR) show a composition bias toward basic residues.

This sequence belongs to the UPF0313 family. The cofactor is [4Fe-4S] cluster.

This is UPF0313 protein YgiQ from Escherichia coli O157:H7.